Reading from the N-terminus, the 296-residue chain is D-alanine--D-alanine ligase (296 aa).

Residues 103–293 (KEILMHYRMP…FDSFVKRIIE (191 aa)) enclose the ATP-grasp domain. 129-180 (ISFPVAVKPSSGGSSIATFKVKSIQELKHAYEEASKYGEVMIEQWVTGKEIT) is an ATP binding site. Positions 247, 260, and 262 each coordinate Mg(2+).

The protein belongs to the D-alanine--D-alanine ligase family. It depends on Mg(2+) as a cofactor. Requires Mn(2+) as cofactor.

The protein localises to the cytoplasm. It catalyses the reaction 2 D-alanine + ATP = D-alanyl-D-alanine + ADP + phosphate + H(+). The protein operates within cell wall biogenesis; peptidoglycan biosynthesis. Its function is as follows. Cell wall formation. This is D-alanine--D-alanine ligase from Francisella tularensis subsp. tularensis (strain WY96-3418).